Here is a 290-residue protein sequence, read N- to C-terminus: Small ribosomal subunit biogenesis GTPase RsgA (290 aa).

Positions Lys-62 to Leu-213 constitute a CP-type G domain. Residues Ser-111–Asp-114 and Gly-156–Thr-164 contribute to the GTP site. The Zn(2+) site is built by Cys-237, Cys-242, His-244, and Cys-250.

This sequence belongs to the TRAFAC class YlqF/YawG GTPase family. RsgA subfamily. Monomer. Associates with 30S ribosomal subunit, binds 16S rRNA. Zn(2+) is required as a cofactor.

It is found in the cytoplasm. Functionally, one of several proteins that assist in the late maturation steps of the functional core of the 30S ribosomal subunit. Helps release RbfA from mature subunits. May play a role in the assembly of ribosomal proteins into the subunit. Circularly permuted GTPase that catalyzes slow GTP hydrolysis, GTPase activity is stimulated by the 30S ribosomal subunit. The polypeptide is Small ribosomal subunit biogenesis GTPase RsgA (Streptococcus agalactiae serotype III (strain NEM316)).